The sequence spans 491 residues: Immediate early protein IE1 (491 aa).

Positions 1 to 11 are enriched in basic and acidic residues; sequence MESSAKRKMDP. The tract at residues 1–24 is nuclear localization signal; that stretch reads MESSAKRKMDPDNPDEGPSSKVPR. The segment at 1 to 30 is disordered; sequence MESSAKRKMDPDNPDEGPSSKVPRPETPVT. The interaction with host PML, interference with PML sumoylation and disruption of PML-associated nuclear bodies stretch occupies residues 132–346; it reads ILDKVHEPFE…SVMKRRIEEI (215 aa). The interaction with host STAT2 stretch occupies residues 373–445; that stretch reads AIAEESDEEE…EEGAQEERED (73 aa). The modulation of STAT3/STAT1 signaling stretch occupies residues 410–420; it reads ATIPLSSVIVA. An interaction with host STAT3 region spans residues 410–445; sequence ATIPLSSVIVAENSDQEESEQSDEEEEEGAQEERED. Positions 421–472 are acidic; that stretch reads ENSDQEESEQSDEEEEEGAQEEREDTVSVKSEPVSEIEEVAPEEEEDGAEEP. Positions 421-491 are disordered; it reads ENSDQEESEQ…PMVTRSKADQ (71 aa). The segment covering 423 to 444 has biased composition (acidic residues); sequence SDQEESEQSDEEEEEGAQEERE. The segment at 449–452 is interaction with host SUMO1; sequence VKSE. A Glycyl lysine isopeptide (Lys-Gly) (interchain with G-Cter in SUMO) cross-link involves residue Lys-450. Over residues 455 to 470 the composition is skewed to acidic residues; it reads SEIEEVAPEEEEDGAE. A chromosome-tethering domain (CTD), binding to histones region spans residues 475–491; sequence SGGKSTHPMVTRSKADQ.

It belongs to the HHV-5 IE1 protein family. As to quaternary structure, forms homodimers. Interacts with human p53/TP53; this interaction inhibits p53/TP53-dependent transactivation activity. Interacts with host STAT1. Interacts with host STAT2; this interaction promotes viral growth and counteracts the antiviral interferon response. May also interact with the host STAT1-STAT2 heterodimer. Interacts with host STAT3; this interaction leads to STAT3 nuclear accumulation and disruption of IL6-induced STAT3 phosphorylation. Interacts with host PML; this interaction inhibits host PML de novo sumoylation and probably inhibits PML regulation of type I and type II interferon-induced gene expression. Interacts with host DAXX. Interacts with host SP100. Interacts with host E2F1. Interacts with host RB1. Interacts with host HDAC1; this interaction inhibits histone deacetylation and promotes viral transcription. Interacts with host HDAC2; this interaction inhibits histone deacetylation and promotes viral transcription. Interacts with host HDAC3; this interaction inhibits histone deacetylation and promotes viral transcription. Interacts with host PLSCR1; this interaction inhibits IE1 transactivating activity. Sumoylated by host PML/nuclear domain 10. Sumoylation abolishes the interaction with host STAT2 and thus the IE1-mediated repression of interferon-stimulated genes.

It localises to the host nucleus. Functionally, plays an important role in transactivating viral early genes as well as activating its own promoter, probably by altering the viral chromatin structure. Expression of IE1 and IE2 proteins is critical for the establishment of lytic infection and reactivation from viral latency. Disrupts PML-associated ND10 nuclear bodies by interfering with host PML and SP100 sumoylation thereby altering the regulation of type I and type II interferon-induced gene expression. Promotes efficient viral growth by interacting with and directing host SP100 to degradation, leading to enhanced acetylation level of histones. In addition, functions in counteracting the host innate antiviral response. Inhibits the type I interferon pathway by directly interacting with and sequestrating host STAT2. Also targets type II interferon pathway by repressing IL6- and STAT3 target genes. Repression of STAT3 genes is due to STAT3 nuclear accumulation and disruption of IL6-induced STAT3 phosphorylation by IE1. This repression is followed by phosphorylation and activation of STAT1. Inhibits host ISG transcription by sequestering host ISGF3 in a PML- and STAT2- binding dependent manner. Alters host cell cycle progression, probably through its interaction with host E2F1 or RB1 that overcomes the RB1-mediated repression of E2F-responsive promoters. May act as a E3 ubiquitin ligase targeting several host proteins including HES1 and SP100A for ubiquitination and subsequent proteasomal degradation. Impairs the radial migration of immature neurons by downregulating Gap junction alpha-1 protein/GJA1 also via ubiquitination and degradation. In Human cytomegalovirus (strain Towne) (HHV-5), this protein is Immediate early protein IE1 (UL123).